Here is a 120-residue protein sequence, read N- to C-terminus: Crustacean hyperglycemic hormones 2 (120 aa).

A signal peptide spans methionine 1–valine 27. 3 cysteine pairs are disulfide-bonded: cysteine 53/cysteine 89, cysteine 69/cysteine 85, and cysteine 72/cysteine 98. Valine 118 is modified (valine amide).

It belongs to the arthropod CHH/MIH/GIH/VIH hormone family.

Its subcellular location is the secreted. Functionally, hormone found in the sinus gland of isopods and decapods which controls the blood sugar level. Has a secretagogue action over the amylase released from the midgut gland. May act as a stress hormone and may be involved in the control of molting and reproduction. This chain is Crustacean hyperglycemic hormones 2, found in Penaeus japonicus (Kuruma prawn).